Here is a 173-residue protein sequence, read N- to C-terminus: Crossover junction endodeoxyribonuclease RuvC (173 aa).

Active-site residues include Asp8, Glu67, and Asp139. Mg(2+)-binding residues include Asp8, Glu67, and Asp139.

Belongs to the RuvC family. In terms of assembly, homodimer which binds Holliday junction (HJ) DNA. The HJ becomes 2-fold symmetrical on binding to RuvC with unstacked arms; it has a different conformation from HJ DNA in complex with RuvA. In the full resolvosome a probable DNA-RuvA(4)-RuvB(12)-RuvC(2) complex forms which resolves the HJ. Requires Mg(2+) as cofactor.

It localises to the cytoplasm. The catalysed reaction is Endonucleolytic cleavage at a junction such as a reciprocal single-stranded crossover between two homologous DNA duplexes (Holliday junction).. Functionally, the RuvA-RuvB-RuvC complex processes Holliday junction (HJ) DNA during genetic recombination and DNA repair. Endonuclease that resolves HJ intermediates. Cleaves cruciform DNA by making single-stranded nicks across the HJ at symmetrical positions within the homologous arms, yielding a 5'-phosphate and a 3'-hydroxyl group; requires a central core of homology in the junction. The consensus cleavage sequence is 5'-(A/T)TT(C/G)-3'. Cleavage occurs on the 3'-side of the TT dinucleotide at the point of strand exchange. HJ branch migration catalyzed by RuvA-RuvB allows RuvC to scan DNA until it finds its consensus sequence, where it cleaves and resolves the cruciform DNA. The chain is Crossover junction endodeoxyribonuclease RuvC from Aeromonas salmonicida (strain A449).